Reading from the N-terminus, the 441-residue chain is Probable membrane metalloprotease ARASP2, chloroplastic (441 aa).

The transit peptide at 1-84 (MLLNISSSPI…DFGSLESVLE (84 aa)) directs the protein to the chloroplast. Position 96 (H96) interacts with Zn(2+). The active site involves E97. H100 is a Zn(2+) binding site. A helical transmembrane segment spans residues 171–191 (VIVVSAGIVANVIFAYAIIFT). Residues 196 to 249 (VGLPVQESFPGVLVPDVKSFSAASRDGLLPGDVILAVDGTELSNSGSDSVSKVV) enclose the PDZ domain. Helical transmembrane passes span 373 to 393 (LAVI…ALIL) and 407 to 427 (VEQG…LFLI).

Belongs to the peptidase M50A family. Zn(2+) serves as cofactor.

The protein resides in the plastid. It is found in the chloroplast inner membrane. Functionally, metalloprotease essential for chloroplast and plant development. May be involved in regulated intramembrane proteolysis (RIP). This chain is Probable membrane metalloprotease ARASP2, chloroplastic, found in Arabidopsis thaliana (Mouse-ear cress).